A 496-amino-acid chain; its full sequence is Adenosylhomocysteinase (496 aa).

Substrate is bound by residues threonine 68, aspartate 157, and glutamate 219. Residue 220–222 (TTT) participates in NAD(+) binding. Residues lysine 249 and aspartate 253 each contribute to the substrate site. Residues asparagine 254, 283-288 (GYGDVG), glutamate 306, asparagine 341, 362-364 (IGH), and asparagine 410 contribute to the NAD(+) site.

This sequence belongs to the adenosylhomocysteinase family. NAD(+) serves as cofactor.

Its subcellular location is the cytoplasm. It catalyses the reaction S-adenosyl-L-homocysteine + H2O = L-homocysteine + adenosine. It functions in the pathway amino-acid biosynthesis; L-homocysteine biosynthesis; L-homocysteine from S-adenosyl-L-homocysteine: step 1/1. May play a key role in the regulation of the intracellular concentration of adenosylhomocysteine. The sequence is that of Adenosylhomocysteinase from Mycolicibacterium paratuberculosis (strain ATCC BAA-968 / K-10) (Mycobacterium paratuberculosis).